A 318-amino-acid polypeptide reads, in one-letter code: Acetyl-coenzyme A carboxylase carboxyl transferase subunit alpha (318 aa).

Residues 36–293 enclose the CoA carboxyltransferase C-terminal domain; that stretch reads EIDRLKEKST…KTRLSEQLDQ (258 aa).

It belongs to the AccA family. In terms of assembly, acetyl-CoA carboxylase is a heterohexamer composed of biotin carboxyl carrier protein (AccB), biotin carboxylase (AccC) and two subunits each of ACCase subunit alpha (AccA) and ACCase subunit beta (AccD).

It is found in the cytoplasm. It carries out the reaction N(6)-carboxybiotinyl-L-lysyl-[protein] + acetyl-CoA = N(6)-biotinyl-L-lysyl-[protein] + malonyl-CoA. It functions in the pathway lipid metabolism; malonyl-CoA biosynthesis; malonyl-CoA from acetyl-CoA: step 1/1. Functionally, component of the acetyl coenzyme A carboxylase (ACC) complex. First, biotin carboxylase catalyzes the carboxylation of biotin on its carrier protein (BCCP) and then the CO(2) group is transferred by the carboxyltransferase to acetyl-CoA to form malonyl-CoA. The sequence is that of Acetyl-coenzyme A carboxylase carboxyl transferase subunit alpha from Teredinibacter turnerae (strain ATCC 39867 / T7901).